The following is a 141-amino-acid chain: uncharacterized protein (141 aa).

Positions 1 to 17 (MNKSESENDSEYHKEYS) are enriched in basic and acidic residues. Positions 1–24 (MNKSESENDSEYHKEYSESSDPED) are disordered. A coiled-coil region spans residues 52 to 115 (IQNLNNNVKE…QMLFEKMRDM (64 aa)).

This is an uncharacterized protein from Acanthamoeba polyphaga (Amoeba).